The chain runs to 2045 residues: Non-reducing polyketide synthase pks27 (2045 aa).

Residues 10 to 247 are N-terminal acylcarrier protein transacylase domain (SAT); sequence IVFGDLTCDS…LTIPIYAPYH (238 aa). A Ketosynthase family 3 (KS3) domain is found at 380–813; sequence HSKLAIIGYS…GGNSSVLIED (434 aa). Catalysis depends on for beta-ketoacyl synthase activity residues cysteine 552, histidine 687, and histidine 731. A malonyl-CoA:ACP transacylase (MAT) domain region spans residues 913-1213; that stretch reads FAFTGQGSQY…VPTLQRNKDT (301 aa). The tract at residues 1289–1422 is N-terminal hotdog fold; it reads HKLVEEKKDG…ASITFPDAKA (134 aa). In terms of domain architecture, PKS/mFAS DH spans 1289-1599; sequence HKLVEEKKDG…AQGVPRRLMD (311 aa). Residue histidine 1321 is the Proton acceptor; for dehydratase activity of the active site. The interval 1442 to 1599 is C-terminal hotdog fold; it reads AARLNTDDRV…AQGVPRRLMD (158 aa). Aspartate 1511 acts as the Proton donor; for dehydratase activity in catalysis. A disordered region spans residues 1612-1636; the sequence is APAGGTLNASQSAAANPAADPSAQA. Over residues 1619–1636 the composition is skewed to low complexity; sequence NASQSAAANPAADPSAQA. The Carrier domain occupies 1635-1712; the sequence is QADSDNWQAA…ELEAFWKQGA (78 aa). The interval 1640 to 1709 is product template (PT) domain; that stretch reads NWQAALKIIS…TIKELEAFWK (70 aa). The residue at position 1672 (serine 1672) is an O-(pantetheine 4'-phosphoryl)serine. The tract at residues 1735–1776 is disordered; sequence EAEVDQDKNSSDEDRSSLGTSSYEVISPNTTETTPEITKTSS. Residues 1739–1750 are compositionally biased toward basic and acidic residues; sequence DQDKNSSDEDRS. Low complexity predominate over residues 1760 to 1776; that stretch reads ISPNTTETTPEITKTSS. Residues 1798–2039 are thioesterase; sequence TLFLLPDGSG…AKRLSEMIEG (242 aa).

The cofactor is pantetheine 4'-phosphate.

The protein operates within secondary metabolite biosynthesis. Non-reducing polyketide synthase (NRPKS); part of the gene cluster 27 that mediates the biosynthesis of asparasone A, a sclerotium-specific anthraquinone pigment important for sclerotial survival. Catalyzes the formation of the aromatic polyketide from acetyl coenzyme A and seven malonyl coenzyme A molecules. Through its product template (PT) domain, catalyzes the cyclization of polyketide backbone via C6-C11 aldolcondensation. In Aspergillus flavus (strain ATCC 200026 / FGSC A1120 / IAM 13836 / NRRL 3357 / JCM 12722 / SRRC 167), this protein is Non-reducing polyketide synthase pks27.